We begin with the raw amino-acid sequence, 341 residues long: Ketol-acid reductoisomerase (NADP(+)) (341 aa).

In terms of domain architecture, KARI N-terminal Rossmann spans 1-182; that stretch reads MTEMFYDDDA…GGTRAGVIKT (182 aa). Residues 25–28, Lys-48, Ser-51, Ser-53, and 83–86 each bind NADP(+); these read YGSQ and DQHQ. The active site involves His-108. Gly-134 serves as a coordination point for NADP(+). Residues 183-328 enclose the KARI C-terminal knotted domain; that stretch reads TFTEETETDL…RELRGLFSWQ (146 aa). Residues Asp-191, Glu-195, Glu-227, and Glu-231 each contribute to the Mg(2+) site. Ser-252 serves as a coordination point for substrate.

This sequence belongs to the ketol-acid reductoisomerase family. Requires Mg(2+) as cofactor.

The catalysed reaction is (2R)-2,3-dihydroxy-3-methylbutanoate + NADP(+) = (2S)-2-acetolactate + NADPH + H(+). The enzyme catalyses (2R,3R)-2,3-dihydroxy-3-methylpentanoate + NADP(+) = (S)-2-ethyl-2-hydroxy-3-oxobutanoate + NADPH + H(+). It participates in amino-acid biosynthesis; L-isoleucine biosynthesis; L-isoleucine from 2-oxobutanoate: step 2/4. The protein operates within amino-acid biosynthesis; L-valine biosynthesis; L-valine from pyruvate: step 2/4. In terms of biological role, involved in the biosynthesis of branched-chain amino acids (BCAA). Catalyzes an alkyl-migration followed by a ketol-acid reduction of (S)-2-acetolactate (S2AL) to yield (R)-2,3-dihydroxy-isovalerate. In the isomerase reaction, S2AL is rearranged via a Mg-dependent methyl migration to produce 3-hydroxy-3-methyl-2-ketobutyrate (HMKB). In the reductase reaction, this 2-ketoacid undergoes a metal-dependent reduction by NADPH to yield (R)-2,3-dihydroxy-isovalerate. The chain is Ketol-acid reductoisomerase (NADP(+)) from Arthrobacter sp. (strain FB24).